The following is an 809-amino-acid chain: Phenylalanine--tRNA ligase beta subunit (809 aa).

Residues 39-153 (APPFSQIVVG…EDTPVGADIR (115 aa)) enclose the tRNA-binding domain. A B5 domain is found at 404–479 (PKREPVRMRV…RIYGFEQIPA (76 aa)). The Mg(2+) site is built by Asp457, Asp463, Glu466, and Glu467. The FDX-ACB domain occupies 706 to 808 (PRVPAVTRDI…AGDAFGARLR (103 aa)).

The protein belongs to the phenylalanyl-tRNA synthetase beta subunit family. Type 1 subfamily. As to quaternary structure, tetramer of two alpha and two beta subunits. Requires Mg(2+) as cofactor.

The protein resides in the cytoplasm. The enzyme catalyses tRNA(Phe) + L-phenylalanine + ATP = L-phenylalanyl-tRNA(Phe) + AMP + diphosphate + H(+). This Ralstonia nicotianae (strain ATCC BAA-1114 / GMI1000) (Ralstonia solanacearum) protein is Phenylalanine--tRNA ligase beta subunit.